A 916-amino-acid chain; its full sequence is Translation initiation factor IF-2 (916 aa).

The tract at residues 1–325 (MTDSNDDKTL…QEKFRRSQVQ (325 aa)) is disordered. Residues 60 to 91 (ITPATPAAPVRAAEPAPAPAQARPQQSTPAPR) are compositionally biased toward low complexity. Over residues 97–108 (GQANQRPQQSYQ) the composition is skewed to polar residues. The segment covering 125 to 182 (SPEEMDARRRALAESQARDAQDAIRRAEEEKRRAAEEAVRKAAEAEEAARRAVEEAAR) has biased composition (basic and acidic residues). Composition is skewed to low complexity over residues 183–209 (QAEA…AEAR) and 229–243 (DGAA…PAAV). One can recognise a tr-type G domain in the interval 414–581 (SRPPVVTIMG…AVLLQAEILD (168 aa)). The interval 423-430 (GHVDHGKT) is G1. 423-430 (GHVDHGKT) lines the GTP pocket. Positions 448–452 (GITQH) are G2. Residues 469–472 (DTPG) form a G3 region. GTP-binding positions include 469-473 (DTPGH) and 523-526 (NKID). The interval 523–526 (NKID) is G4. The segment at 559 to 561 (SAK) is G5.

The protein belongs to the TRAFAC class translation factor GTPase superfamily. Classic translation factor GTPase family. IF-2 subfamily.

The protein resides in the cytoplasm. In terms of biological role, one of the essential components for the initiation of protein synthesis. Protects formylmethionyl-tRNA from spontaneous hydrolysis and promotes its binding to the 30S ribosomal subunits. Also involved in the hydrolysis of GTP during the formation of the 70S ribosomal complex. This chain is Translation initiation factor IF-2, found in Rhizobium etli (strain ATCC 51251 / DSM 11541 / JCM 21823 / NBRC 15573 / CFN 42).